We begin with the raw amino-acid sequence, 374 residues long: CMP-N-acetylneuraminate-beta-1,4-galactoside alpha-2,3-sialyltransferase (374 aa).

The Cytoplasmic portion of the chain corresponds to 1 to 8; sequence MGLLVFVR. The helical; Signal-anchor for type II membrane protein transmembrane segment at 9-28 threads the bilayer; it reads NLLLALCLFLVLGFLYYSAW. At 29–374 the chain is on the lumenal side; the sequence is KLHLLQWEDS…RVITDLSSGI (346 aa). Asn-79 and Asn-170 each carry an N-linked (GlcNAc...) asparagine glycan. Cysteines 159 and 313 form a disulfide.

Belongs to the glycosyltransferase 29 family. In terms of processing, the soluble form derives from the membrane form by proteolytic processing. Found in all tissues tested. High expression found in brain, liver, kidney, colon, heart and lung.

The protein localises to the golgi apparatus. The protein resides in the golgi stack membrane. It is found in the secreted. It catalyses the reaction a beta-D-galactosyl-(1-&gt;4)-N-acetyl-beta-D-glucosaminyl derivative + CMP-N-acetyl-beta-neuraminate = an N-acetyl-alpha-neuraminyl-(2-&gt;3)-beta-D-galactosyl-(1-&gt;4)-N-acetyl-beta-D-glucosaminyl derivative + CMP + H(+). It participates in protein modification; protein glycosylation. In terms of biological role, catalyzes the formation of the NeuAc-alpha-2,3-Gal-beta-1,4-GlcNAc-, NeuAc-alpha-2,3-Gal-beta-1,3-GlcNAc- and NeuAc-alpha-2,3-Gal-beta-1,3-GalNAc- sequences found in terminal carbohydrate groups of glycoproteins and glycolipids. The highest activity is toward Gal-beta-1,3-GlcNAc and the lowest toward Gal-beta-1,3-GalNAc. This chain is CMP-N-acetylneuraminate-beta-1,4-galactoside alpha-2,3-sialyltransferase (St3gal3), found in Rattus norvegicus (Rat).